Consider the following 180-residue polypeptide: Oligoribonuclease (180 aa).

An Exonuclease domain is found at Leu-7 to Leu-170. Tyr-128 is a catalytic residue.

The protein belongs to the oligoribonuclease family.

The protein resides in the cytoplasm. Functionally, 3'-to-5' exoribonuclease specific for small oligoribonucleotides. This is Oligoribonuclease from Pectobacterium atrosepticum (strain SCRI 1043 / ATCC BAA-672) (Erwinia carotovora subsp. atroseptica).